A 746-amino-acid polypeptide reads, in one-letter code: Exostosin-1 (746 aa).

Residues 1-7 lie on the Cytoplasmic side of the membrane; it reads MQAKKRY. A helical; Signal-anchor for type II membrane protein membrane pass occupies residues 8–28; it reads FILLSAGSCLALLFYFGGVQF. Over 29 to 746 the chain is Lumenal; that stretch reads RASRSHSRRE…RKKYRDIERL (718 aa). An N-linked (GlcNAc...) asparagine glycan is attached at asparagine 89. 2 disulfides stabilise this stretch: cysteine 98–cysteine 103 and cysteine 109–cysteine 152. Positions 166 and 203 each coordinate a protein. The UDP site is built by lysine 267, lysine 269, tyrosine 271, and arginine 280. Residues cysteine 298 and cysteine 312 are joined by a disulfide bond. An a protein-binding site is contributed by histidine 300. 2 residues coordinate UDP: tyrosine 319 and tyrosine 324. Residue asparagine 330 is glycosylated (N-linked (GlcNAc...) asparagine). 2 disulfide bridges follow: cysteine 334–cysteine 355 and cysteine 652–cysteine 704. Positions 346 and 349 each coordinate UDP.

Belongs to the glycosyltransferase 47 family. As to quaternary structure, part of the heparan sulfate polymerase, a dimeric complex composed of EXT1 and EXT2. Could also form homooligomeric complexes. Interacts with NDST1. In terms of processing, N-glycosylated.

The protein resides in the golgi apparatus membrane. Its subcellular location is the golgi apparatus. It localises to the cis-Golgi network membrane. It is found in the endoplasmic reticulum membrane. The catalysed reaction is 3-O-{alpha-D-GlcNAc-[(1-&gt;4)-beta-D-GlcA-(1-&gt;4)-alpha-D-GlcNAc](n)-(1-&gt;4)-beta-D-GlcA-(1-&gt;3)-beta-D-Gal-(1-&gt;3)-beta-D-Gal-(1-&gt;4)-beta-D-Xyl}-L-seryl-[protein] + UDP-alpha-D-glucuronate = 3-O-{[(1-&gt;4)-beta-D-GlcA-(1-&gt;4)-alpha-D-GlcNAc](n+1)-(1-&gt;4)-beta-D-GlcA-(1-&gt;3)-beta-D-Gal-(1-&gt;3)-beta-D-Gal-(1-&gt;4)-beta-D-Xyl}-L-seryl-[protein] + UDP + H(+). It functions in the pathway protein modification; protein glycosylation. Glycosyltransferase forming with EXT2 the heterodimeric heparan sulfate polymerase which catalyzes the elongation of the heparan sulfate glycan backbone. Glycan backbone extension consists in the alternating transfer of (1-&gt;4)-beta-D-GlcA and (1-&gt;4)-alpha-D-GlcNAc residues from their respective UDP-sugar donors. Both EXT1 and EXT2 are required for the full activity of the polymerase since EXT1 bears the N-acetylglucosaminyl-proteoglycan 4-beta-glucuronosyltransferase activity within the complex while EXT2 carries the glucuronosyl-N-acetylglucosaminyl-proteoglycan 4-alpha-N-acetylglucosaminyltransferase activity. Heparan sulfate proteoglycans are ubiquitous components of the extracellular matrix and play an important role in tissue homeostasis and signaling. In Mus musculus (Mouse), this protein is Exostosin-1.